The following is a 334-amino-acid chain: E3 ubiquitin-protein ligase ATL4 (334 aa).

The disordered stretch occupies residues 1–20 (MESLINPSHGGGNYDSHSSS). Residues 28–48 (VLVIILILLMTLLISVSICFL) form a helical membrane-spanning segment. The segment at 117 to 159 (CAVCLSKFEPEDQLRLLPLCCHAFHADCIDIWLVSNQTCPLCR) adopts an RING-type; atypical zinc-finger fold.

Belongs to the RING-type zinc finger family. ATL subfamily.

It localises to the membrane. The enzyme catalyses S-ubiquitinyl-[E2 ubiquitin-conjugating enzyme]-L-cysteine + [acceptor protein]-L-lysine = [E2 ubiquitin-conjugating enzyme]-L-cysteine + N(6)-ubiquitinyl-[acceptor protein]-L-lysine.. The protein operates within protein modification; protein ubiquitination. Its function is as follows. E3 ubiquitin-protein ligase able to catalyze polyubiquitination with ubiquitin-conjugating enzyme E2 UBC8 in vitro. The chain is E3 ubiquitin-protein ligase ATL4 from Arabidopsis thaliana (Mouse-ear cress).